A 31-amino-acid polypeptide reads, in one-letter code: Cytochrome b6-f complex subunit 6 (31 aa).

A helical transmembrane segment spans residues 4-24; the sequence is ITSYFGFLLAALTITSALFIG.

Belongs to the PetL family. In terms of assembly, the 4 large subunits of the cytochrome b6-f complex are cytochrome b6, subunit IV (17 kDa polypeptide, PetD), cytochrome f and the Rieske protein, while the 4 small subunits are PetG, PetL, PetM and PetN. The complex functions as a dimer.

The protein resides in the plastid. The protein localises to the chloroplast thylakoid membrane. Functionally, component of the cytochrome b6-f complex, which mediates electron transfer between photosystem II (PSII) and photosystem I (PSI), cyclic electron flow around PSI, and state transitions. PetL is important for photoautotrophic growth as well as for electron transfer efficiency and stability of the cytochrome b6-f complex. The sequence is that of Cytochrome b6-f complex subunit 6 from Humulus lupulus (European hop).